Here is a 373-residue protein sequence, read N- to C-terminus: Peroxisomal biogenesis factor 3 (373 aa).

The Cytoplasmic segment spans residues 1–15 (MFRSTWNFLKRHKKK). The segment at 1-45 (MFRSTWNFLKRHKKKCIFLGTVLGGVYILGKYGQKKIREIQEREA) is targeting to peroxisomes. A helical transmembrane segment spans residues 16 to 36 (CIFLGTVLGGVYILGKYGQKK). The Peroxisomal portion of the chain corresponds to 37–116 (IREIQEREAA…LKIISFTRSI (80 aa)). Residues 117–140 (VAVYSTCMLVVLLRVQLNIIGGYI) form a helical membrane-spanning segment. The tract at residues 120-136 (YSTCMLVVLLRVQLNII) is interaction with PEX19. Topologically, residues 141–373 (YLDNAAVGKN…AFSTPQQLEK (233 aa)) are cytoplasmic.

This sequence belongs to the peroxin-3 family. As to quaternary structure, interacts with PEX19.

It is found in the peroxisome membrane. Its function is as follows. Involved in peroxisome biosynthesis and integrity. Assembles membrane vesicles before the matrix proteins are translocated. As a docking factor for PEX19, is necessary for the import of peroxisomal membrane proteins in the peroxisomes. In Bos taurus (Bovine), this protein is Peroxisomal biogenesis factor 3 (PEX3).